A 338-amino-acid polypeptide reads, in one-letter code: Fructose-1,6-bisphosphatase class 1 (338 aa).

Positions 91, 113, 115, and 116 each coordinate Mg(2+). Residues 116-119 (DGSS), Asn-211, Tyr-244, and Lys-277 each bind substrate. Glu-283 is a binding site for Mg(2+).

It belongs to the FBPase class 1 family. Homotetramer. The cofactor is Mg(2+).

Its subcellular location is the cytoplasm. The enzyme catalyses beta-D-fructose 1,6-bisphosphate + H2O = beta-D-fructose 6-phosphate + phosphate. It participates in carbohydrate biosynthesis; gluconeogenesis. The chain is Fructose-1,6-bisphosphatase class 1 from Oleidesulfovibrio alaskensis (strain ATCC BAA-1058 / DSM 17464 / G20) (Desulfovibrio alaskensis).